A 356-amino-acid chain; its full sequence is Methionine import ATP-binding protein MetN 1 (356 aa).

Residues Ile-15–Leu-254 enclose the ABC transporter domain. Gly-51–Ser-58 serves as a coordination point for ATP.

It belongs to the ABC transporter superfamily. Methionine importer (TC 3.A.1.24) family. The complex is composed of two ATP-binding proteins (MetN), two transmembrane proteins (MetI) and a solute-binding protein (MetQ).

The protein resides in the cell inner membrane. The catalysed reaction is L-methionine(out) + ATP + H2O = L-methionine(in) + ADP + phosphate + H(+). The enzyme catalyses D-methionine(out) + ATP + H2O = D-methionine(in) + ADP + phosphate + H(+). Its function is as follows. Part of the ABC transporter complex MetNIQ involved in methionine import. Responsible for energy coupling to the transport system. In Acinetobacter baylyi (strain ATCC 33305 / BD413 / ADP1), this protein is Methionine import ATP-binding protein MetN 1.